The following is a 1090-amino-acid chain: Protein CHROMATIN REMODELING 24 (1090 aa).

2 disordered regions span residues 1 to 51 and 247 to 273; these read MAEN…MIKL and VGKQNSYSGRHFDDNSEDNRQGYNLDR. The Nuclear localization signal motif lies at 44–51; sequence TKKSMIKL. The span at 256–273 shows a compositional bias: basic and acidic residues; the sequence is RHFDDNSEDNRQGYNLDR. Residues 389 to 564 form the Helicase ATP-binding domain; it reads WSLHTQGKGG…WALFNFSCPG (176 aa). 402–409 lines the ATP pocket; that stretch reads DDMGLGKT. The short motif at 515–518 is the DEAH box element; that stretch reads DEGH. The region spanning 736-895 is the Helicase C-terminal domain; that stretch reads FIMSLLENLI…IRYFSQQDLR (160 aa). Residues 1043–1069 adopt a coiled-coil conformation; it reads DGGAKIQKQIAELTRELKDMKAAERIN.

The protein belongs to the SNF2/RAD54 helicase family.

The protein resides in the nucleus. Functionally, DNA helicase that acts as an essential component of the spindle assembly checkpoint. Probable chromatin remodeling factor that regulate homologous recombination (HR) and non-homologous recombination (NHR). This chain is Protein CHROMATIN REMODELING 24, found in Arabidopsis thaliana (Mouse-ear cress).